Consider the following 374-residue polypeptide: Queuine tRNA-ribosyltransferase (374 aa).

Aspartate 89 acts as the Proton acceptor in catalysis. Residues 89 to 93 (DSGGF), aspartate 143, glutamine 185, and glycine 212 each bind substrate. Residues 243-249 (GVGKPED) are RNA binding. Catalysis depends on aspartate 262, which acts as the Nucleophile. Residues 267-271 (TRNAR) are RNA binding; important for wobble base 34 recognition. Zn(2+) is bound by residues cysteine 300, cysteine 302, cysteine 305, and histidine 331.

This sequence belongs to the queuine tRNA-ribosyltransferase family. As to quaternary structure, homodimer. Within each dimer, one monomer is responsible for RNA recognition and catalysis, while the other monomer binds to the replacement base PreQ1. Zn(2+) serves as cofactor.

It catalyses the reaction 7-aminomethyl-7-carbaguanine + guanosine(34) in tRNA = 7-aminomethyl-7-carbaguanosine(34) in tRNA + guanine. The protein operates within tRNA modification; tRNA-queuosine biosynthesis. In terms of biological role, catalyzes the base-exchange of a guanine (G) residue with the queuine precursor 7-aminomethyl-7-deazaguanine (PreQ1) at position 34 (anticodon wobble position) in tRNAs with GU(N) anticodons (tRNA-Asp, -Asn, -His and -Tyr). Catalysis occurs through a double-displacement mechanism. The nucleophile active site attacks the C1' of nucleotide 34 to detach the guanine base from the RNA, forming a covalent enzyme-RNA intermediate. The proton acceptor active site deprotonates the incoming PreQ1, allowing a nucleophilic attack on the C1' of the ribose to form the product. After dissociation, two additional enzymatic reactions on the tRNA convert PreQ1 to queuine (Q), resulting in the hypermodified nucleoside queuosine (7-(((4,5-cis-dihydroxy-2-cyclopenten-1-yl)amino)methyl)-7-deazaguanosine). This Saccharophagus degradans (strain 2-40 / ATCC 43961 / DSM 17024) protein is Queuine tRNA-ribosyltransferase.